Reading from the N-terminus, the 328-residue chain is Formyltetrahydrofolate deformylase 2, mitochondrial (328 aa).

Residues 1-12 (MIRRVSTTSCLS) constitute a mitochondrion transit peptide. Positions 46 to 129 (FHVFHCPDVV…SVVRVPSLDP (84 aa)) constitute an ACT domain. Asp-272 is an active-site residue.

Belongs to the PurU family. As to expression, expressed in leaves, cotyledons, roots, seeds and flowers.

It is found in the mitochondrion. It carries out the reaction (6R)-10-formyltetrahydrofolate + H2O = (6S)-5,6,7,8-tetrahydrofolate + formate + H(+). Its function is as follows. Deformylase involved in photorespiration. Prevents excessive accumulation of 5-formyl tetrahydrofolate (THF), a potent inhibitor of the Gly decarboxylase/Ser hydroxymethyltransferase complex. This chain is Formyltetrahydrofolate deformylase 2, mitochondrial (PURU2), found in Arabidopsis thaliana (Mouse-ear cress).